The primary structure comprises 514 residues: MSNIRHALTVKREDDFAAWYQAVIAEADLAEESGVRGCMVIKPWGYGIWERIQRLLDDRIKATGHENVYFPIFIPLSNFEREAEHVEGFAKEMAVVTHHRLIGDGEGGLIPDPEAKLEEPLVVRPTSETIFGDAMARWIQSWRDLPLLTNQWANVVRWEMRTRMFLRTSEFLWQEGHTAHATAEEAKEHTLTMLEVYRAHAEEDLALPVIAGEKPENERFPGAVETWSIEAMMQDGKALQAGTSHYLGTNFSEAANIKFQDREGGEKYCHTTSWGVSTRMIGGVIMTHGDDDGLKVPPRIAPYQVVILPMLRDKPEDDALLAYCEDLRGKLITESAMGEPVRVLLDKKPGKAAAKRWNWVRKGAPIVIEVGGRDMENGVVSLLRRDELWNEETGKPAFQAPTPAQLTDEIASMLDSIQAGMFGTAQTWRNANVMSGCTSFEQLRDHYSDGKKHVGWVEVQWSKPTGQELEKVVEKLKDLKLTIRNVPMDTPAPTGSCIFTGKPAVEWIYVAKAY.

Belongs to the class-II aminoacyl-tRNA synthetase family. ProS type 3 subfamily. As to quaternary structure, homodimer.

The protein localises to the cytoplasm. It carries out the reaction tRNA(Pro) + L-proline + ATP = L-prolyl-tRNA(Pro) + AMP + diphosphate. In terms of biological role, catalyzes the attachment of proline to tRNA(Pro) in a two-step reaction: proline is first activated by ATP to form Pro-AMP and then transferred to the acceptor end of tRNA(Pro). The sequence is that of Proline--tRNA ligase from Erythrobacter litoralis (strain HTCC2594).